The primary structure comprises 881 residues: Valine--tRNA ligase (881 aa).

Positions 42–52 (PNITGDLHVGH) match the 'HIGH' region motif. The 'KMSKS' region motif lies at 554–558 (KMSKS). ATP is bound at residue Lys-557.

The protein belongs to the class-I aminoacyl-tRNA synthetase family. ValS type 1 subfamily. Monomer.

The protein localises to the cytoplasm. The catalysed reaction is tRNA(Val) + L-valine + ATP = L-valyl-tRNA(Val) + AMP + diphosphate. In terms of biological role, catalyzes the attachment of valine to tRNA(Val). As ValRS can inadvertently accommodate and process structurally similar amino acids such as threonine, to avoid such errors, it has a 'posttransfer' editing activity that hydrolyzes mischarged Thr-tRNA(Val) in a tRNA-dependent manner. In Wigglesworthia glossinidia brevipalpis, this protein is Valine--tRNA ligase.